The following is a 236-amino-acid chain: Probable metal transport system ATP-binding protein CT_416 (236 aa).

Positions 5–236 (MLLENVSFRY…FCCNTFGRCP (232 aa)) constitute an ABC transporter domain. An ATP-binding site is contributed by 39–46 (GPNGGGKT).

This sequence belongs to the ABC transporter superfamily.

Its subcellular location is the cell inner membrane. In terms of biological role, part of an ATP-driven transport system CT_415/CT_416/CT_417 for a metal. Probably responsible for energy coupling to the transport system. The chain is Probable metal transport system ATP-binding protein CT_416 from Chlamydia trachomatis serovar D (strain ATCC VR-885 / DSM 19411 / UW-3/Cx).